Reading from the N-terminus, the 255-residue chain is Protein PH0439 (255 aa).

This sequence belongs to the CinA family.

The polypeptide is Protein PH0439 (Pyrococcus horikoshii (strain ATCC 700860 / DSM 12428 / JCM 9974 / NBRC 100139 / OT-3)).